Reading from the N-terminus, the 219-residue chain is Proteasome subunit beta type-9 (219 aa).

A propeptide spans 1–20 (MLRTGAPNGDLPRAGEVHTG) (removed in mature form). Threonine 21 serves as the catalytic Nucleophile. Lysine 53 and lysine 109 each carry N6-acetyllysine.

The protein belongs to the peptidase T1B family. In terms of assembly, the 26S proteasome consists of a 20S proteasome core and two 19S regulatory subunits. The 20S proteasome core is composed of 28 subunits that are arranged in four stacked rings, resulting in a barrel-shaped structure. The two end rings are each formed by seven alpha subunits, and the two central rings are each formed by seven beta subunits. The catalytic chamber with the active sites is on the inside of the barrel. Component of the immunoproteasome, where it displaces the equivalent housekeeping subunit PSMB6. Component of the spermatoproteasome, a form of the proteasome specifically found in testis. Post-translationally, autocleaved. The resulting N-terminal Thr residue of the mature subunit is responsible for the nucleophile proteolytic activity.

It localises to the cytoplasm. Its subcellular location is the nucleus. It carries out the reaction Cleavage of peptide bonds with very broad specificity.. Functionally, the proteasome is a multicatalytic proteinase complex which is characterized by its ability to cleave peptides with Arg, Phe, Tyr, Leu, and Glu adjacent to the leaving group at neutral or slightly basic pH. The proteasome has an ATP-dependent proteolytic activity. This subunit is involved in antigen processing to generate class I binding peptides. This is Proteasome subunit beta type-9 (PSMB9) from Bos taurus (Bovine).